The sequence spans 212 residues: Glycerol-3-phosphate acyltransferase (212 aa).

Helical transmembrane passes span 5–25 (ALGM…ILVC), 53–73 (VAAA…VWLA), 80–100 (PLYL…PVFF), 112–132 (FGAI…TWLL), and 138–158 (GYSS…VWWF).

It belongs to the PlsY family. As to quaternary structure, probably interacts with PlsX.

Its subcellular location is the cell inner membrane. The catalysed reaction is an acyl phosphate + sn-glycerol 3-phosphate = a 1-acyl-sn-glycero-3-phosphate + phosphate. Its pathway is lipid metabolism; phospholipid metabolism. Its function is as follows. Catalyzes the transfer of an acyl group from acyl-phosphate (acyl-PO(4)) to glycerol-3-phosphate (G3P) to form lysophosphatidic acid (LPA). This enzyme utilizes acyl-phosphate as fatty acyl donor, but not acyl-CoA or acyl-ACP. The chain is Glycerol-3-phosphate acyltransferase from Serratia proteamaculans (strain 568).